We begin with the raw amino-acid sequence, 484 residues long: Probable glycine dehydrogenase (decarboxylating) subunit 2 (484 aa).

An N6-(pyridoxal phosphate)lysine modification is found at Lys270.

It belongs to the GcvP family. C-terminal subunit subfamily. The glycine cleavage system is composed of four proteins: P, T, L and H. In this organism, the P 'protein' is a heterodimer of two subunits. It depends on pyridoxal 5'-phosphate as a cofactor.

The catalysed reaction is N(6)-[(R)-lipoyl]-L-lysyl-[glycine-cleavage complex H protein] + glycine + H(+) = N(6)-[(R)-S(8)-aminomethyldihydrolipoyl]-L-lysyl-[glycine-cleavage complex H protein] + CO2. Its function is as follows. The glycine cleavage system catalyzes the degradation of glycine. The P protein binds the alpha-amino group of glycine through its pyridoxal phosphate cofactor; CO(2) is released and the remaining methylamine moiety is then transferred to the lipoamide cofactor of the H protein. The chain is Probable glycine dehydrogenase (decarboxylating) subunit 2 from Desulforamulus reducens (strain ATCC BAA-1160 / DSM 100696 / MI-1) (Desulfotomaculum reducens).